Consider the following 229-residue polypeptide: MELLLLSNSTLPGKAWLEHALPLIANQLNGRRSAVFIPFAGVTQTWDEYTDKTAEVLAPLGINVTGIHRVADPLAAIEKAEIIIVGGGNTFQLLKESRERELLAPVADRVKRGALYIGWSAGANLACPTIRTTNDMPIVDPNGFDALDLFPLQINPHFTNALPEGHKGETREQRIRELLVVAPELTVIGLPEGNWIQVSNGQAVLGGPNTTWVFKAGEEAVALEAGHRF.

Active-site charge relay system residues include S120, D135, and H157.

It belongs to the peptidase S51 family.

Its subcellular location is the cytoplasm. The enzyme catalyses Dipeptidase E catalyzes the hydrolysis of dipeptides Asp-|-Xaa. It does not act on peptides with N-terminal Glu, Asn or Gln, nor does it cleave isoaspartyl peptides.. Hydrolyzes dipeptides containing N-terminal aspartate residues. May play a role in allowing the cell to use peptide aspartate to spare carbon otherwise required for the synthesis of the aspartate family of amino acids. The chain is Peptidase E from Salmonella paratyphi A (strain AKU_12601).